Here is a 220-residue protein sequence, read N- to C-terminus: Ribonuclease HII (220 aa).

The RNase H type-2 domain maps to 16–216; sequence PVFAGIDEAG…VRPNPAAEEQ (201 aa). A divalent metal cation is bound by residues D22, E23, and D114.

This sequence belongs to the RNase HII family. The cofactor is Mn(2+). Mg(2+) serves as cofactor.

The protein resides in the cytoplasm. The catalysed reaction is Endonucleolytic cleavage to 5'-phosphomonoester.. Its function is as follows. Endonuclease that specifically degrades the RNA of RNA-DNA hybrids. The protein is Ribonuclease HII of Nitratidesulfovibrio vulgaris (strain ATCC 29579 / DSM 644 / CCUG 34227 / NCIMB 8303 / VKM B-1760 / Hildenborough) (Desulfovibrio vulgaris).